The sequence spans 142 residues: Hemoglobin subunit alpha-3 (142 aa).

The region spanning 2–142 (VLSAADKSNV…VSTVLTSKYR (141 aa)) is the Globin domain. Residue H59 coordinates O2. Heme b is bound at residue H88.

It belongs to the globin family. Heterotetramer of two alpha chains and two beta chains. In terms of tissue distribution, red blood cells.

Its function is as follows. Involved in oxygen transport from the lung to the various peripheral tissues. The polypeptide is Hemoglobin subunit alpha-3 (Bubalus bubalis (Domestic water buffalo)).